The primary structure comprises 263 residues: 4-hydroxy-tetrahydrodipicolinate reductase (263 aa).

NAD(+) contacts are provided by residues 7-12, 96-98, and 122-125; these read GFKGRM, GTT, and APNF. His-152 acts as the Proton donor/acceptor in catalysis. A (S)-2,3,4,5-tetrahydrodipicolinate-binding site is contributed by His-153. The active-site Proton donor is Lys-156. 162-163 is a (S)-2,3,4,5-tetrahydrodipicolinate binding site; sequence GT.

The protein belongs to the DapB family.

It localises to the cytoplasm. The enzyme catalyses (S)-2,3,4,5-tetrahydrodipicolinate + NAD(+) + H2O = (2S,4S)-4-hydroxy-2,3,4,5-tetrahydrodipicolinate + NADH + H(+). It catalyses the reaction (S)-2,3,4,5-tetrahydrodipicolinate + NADP(+) + H2O = (2S,4S)-4-hydroxy-2,3,4,5-tetrahydrodipicolinate + NADPH + H(+). It functions in the pathway amino-acid biosynthesis; L-lysine biosynthesis via DAP pathway; (S)-tetrahydrodipicolinate from L-aspartate: step 4/4. In terms of biological role, catalyzes the conversion of 4-hydroxy-tetrahydrodipicolinate (HTPA) to tetrahydrodipicolinate. The protein is 4-hydroxy-tetrahydrodipicolinate reductase of Listeria welshimeri serovar 6b (strain ATCC 35897 / DSM 20650 / CCUG 15529 / CIP 8149 / NCTC 11857 / SLCC 5334 / V8).